A 459-amino-acid chain; its full sequence is Cobyrinate a,c-diamide synthase (459 aa).

One can recognise a GATase cobBQ-type domain in the interval Thr-252 to Glu-446. The active-site Nucleophile is the Cys-334.

Belongs to the CobB/CbiA family. As to quaternary structure, monomer. The cofactor is Mg(2+).

The enzyme catalyses cob(II)yrinate + 2 L-glutamine + 2 ATP + 2 H2O = cob(II)yrinate a,c diamide + 2 L-glutamate + 2 ADP + 2 phosphate + 2 H(+). Its pathway is cofactor biosynthesis; adenosylcobalamin biosynthesis; cob(II)yrinate a,c-diamide from sirohydrochlorin (anaerobic route): step 10/10. Functionally, catalyzes the ATP-dependent amidation of the two carboxylate groups at positions a and c of cobyrinate, using either L-glutamine or ammonia as the nitrogen source. Is able to use other nucleotide triphosphates as substrate, such as GTP or UTP, although less efficiently than ATP. In Salmonella typhimurium (strain LT2 / SGSC1412 / ATCC 700720), this protein is Cobyrinate a,c-diamide synthase.